The primary structure comprises 175 residues: Vitamin K epoxide reductase complex subunit 1-like protein 1 (175 aa).

Residues 1–12 (MAAPVLRVSTPR) lie on the Cytoplasmic side of the membrane. Residues 13 to 35 (WERIARVLVCLLGILLSLYAFHV) form a helical membrane-spanning segment. Topologically, residues 36-86 (EREHARDPSYKALCDVSSSISCSKVFGSRWGRGFGLLGSIFGNDSALNQPN) are lumenal. The cysteines at positions 49 and 57 are disulfide-linked. Residue Asn-86 coordinates (S)-warfarin. A helical membrane pass occupies residues 87–101 (SVYGIVFYAFQLLLG). At 102-106 (MTVSA) the chain is on the cytoplasmic side. Residues 107-134 (MAALILMTTSIMSVVGSLYLGYILYFVL) traverse the membrane as a helical segment. At 135-137 (KDL) the chain is on the lumenal side. Cys-138 and Cys-141 form a disulfide bridge. Residues 138–159 (CVICVTTYALNFILFVLNYKRL) form a helical membrane-spanning segment. Residues Cys-141 and Tyr-145 each coordinate phylloquinone. Tyr-145 provides a ligand contact to (S)-warfarin. Residues 160–175 (VYLNEAWKQKLQAKQD) lie on the Cytoplasmic side of the membrane.

Belongs to the VKOR family.

The protein resides in the endoplasmic reticulum membrane. It catalyses the reaction phylloquinone + [protein]-disulfide + H2O = 2,3-epoxyphylloquinone + [protein]-dithiol. The catalysed reaction is phylloquinol + [protein]-disulfide = phylloquinone + [protein]-dithiol. Its activity is regulated as follows. Inhibited by warfarin (coumadin). Warfarin locks VKORC1 in both redox states into the closed conformation. Its function is as follows. Involved in vitamin K metabolism. Can reduce inactive vitamin K 2,3-epoxide to active vitamin K, and may contribute to vitamin K-mediated protection against oxidative stress. Plays a role in vitamin K-dependent gamma-carboxylation of Glu residues in target proteins. This Takifugu rubripes (Japanese pufferfish) protein is Vitamin K epoxide reductase complex subunit 1-like protein 1 (vkorc1l1).